Here is a 273-residue protein sequence, read N- to C-terminus: Large ribosomal subunit protein uL2cz/uL2cy (273 aa).

Disordered stretches follow at residues 1 to 23 and 224 to 273; these read MAIH…SQVK and NPVD…RRRK.

The protein belongs to the universal ribosomal protein uL2 family. In terms of assembly, part of the 50S ribosomal subunit.

The protein localises to the plastid. It is found in the chloroplast. This chain is Large ribosomal subunit protein uL2cz/uL2cy (rpl2-A), found in Amborella trichopoda.